A 460-amino-acid polypeptide reads, in one-letter code: MTSPSTSKNHRCLNLISKCKSLQNLKQIHAQIITIGLSHHTYPLSKLLHLSSTVCLSYALSILRQIPNPSVFLYNTLISSIVSNHNSTQTHLAFSLYDQILSSRSNFVRPNEFTYPSLFKASGFDAQWHRHGRALHAHVLKFLEPVNHDRFVQAALVGFYANCGKLREARSLFERIREPDLATWNTLLAAYANSEEIDSDEEVLLLFMRMQVRPNELSLVALIKSCANLGEFVRGVWAHVYVLKNNLTLNQFVGTSLIDLYSKCGCLSFARKVFDEMSQRDVSCYNAMIRGLAVHGFGQEGIELYKSLISQGLVPDSATFVVTISACSHSGLVDEGLQIFNSMKAVYGIEPKVEHYGCLVDLLGRSGRLEEAEECIKKMPVKPNATLWRSFLGSSQTHGDFERGEIALKHLLGLEFENSGNYVLLSNIYAGVNRWTDVEKTRELMKDHRVNKSPGISTLN.

PPR repeat units lie at residues 70 to 107, 111 to 142, 149 to 179, 180 to 214, 215 to 249, 250 to 280, 281 to 315, 316 to 351, and 352 to 382; these read SVFL…RSNF, NEFT…VLKF, DRFV…IREP, DLAT…QVRP, NELS…NLTL, NQFV…MSQR, DVSC…GLVP, DSAT…GIEP, and KVEH…MPVK. The type E motif; degenerate stretch occupies residues 387–460; it reads LWRSFLGSSQ…NKSPGISTLN (74 aa).

It belongs to the PPR family. PCMP-E subfamily.

The polypeptide is Pentatricopeptide repeat-containing protein At5g43790 (PCMP-E30) (Arabidopsis thaliana (Mouse-ear cress)).